We begin with the raw amino-acid sequence, 89 residues long: Small ribosomal subunit protein uS14 (89 aa).

The protein belongs to the universal ribosomal protein uS14 family. As to quaternary structure, part of the 30S ribosomal subunit. Contacts proteins S3 and S10.

Its function is as follows. Binds 16S rRNA, required for the assembly of 30S particles and may also be responsible for determining the conformation of the 16S rRNA at the A site. The polypeptide is Small ribosomal subunit protein uS14 (Shouchella clausii (strain KSM-K16) (Alkalihalobacillus clausii)).